We begin with the raw amino-acid sequence, 631 residues long: DDB1- and CUL4-associated factor 8-like protein 2 (631 aa).

Disordered stretches follow at residues 1–91 and 108–163; these read MSHQ…EDFE and EEET…HEQY. The segment covering 44–54 has biased composition (polar residues); the sequence is SELSVTVTGDG. 2 stretches are compositionally biased toward acidic residues: residues 77-88 and 108-147; these read SASEDIELESLE and EEET…EEEE. WD repeat units follow at residues 226–265, 269–310, 316–356, 364–404, 420–459, 467–507, and 511–550; these read DHVG…PVLN, GHTN…YFNN, QHRG…PASK, DKKV…KKEN, DFPT…GAQY, RNNT…IIQF, and SREG…ATEL. A disordered region spans residues 594–631; it reads QDWRSGEAEFPDEESDESSSTSETSEEEVQDRVQCMPS.

Belongs to the WD repeat DCAF8 family.

This chain is DDB1- and CUL4-associated factor 8-like protein 2 (DCAF8L2), found in Homo sapiens (Human).